A 167-amino-acid polypeptide reads, in one-letter code: Brain ribonuclease (167 aa).

An N-terminal signal peptide occupies residues 1 to 26 (MALKSLVLLSLLVLVLLLVQVQPSLG). Positions 33 and 36 each coordinate substrate. His38 acts as the Proton acceptor in catalysis. Cystine bridges form between Cys52–Cys110, Cys66–Cys121, Cys84–Cys136, and Cys91–Cys98. 67–71 (KPVNT) lines the substrate pocket. Asn88 is a glycosylation site (N-linked (GlcNAc...) asparagine). Residues Lys92 and Arg111 each contribute to the substrate site. His145 acts as the Proton donor in catalysis. A glycan (O-linked (GalNAc...) threonine) is linked at Thr155. An O-linked (GalNAc...) serine glycan is attached at Ser159.

It belongs to the pancreatic ribonuclease family.

It is found in the secreted. The protein is Brain ribonuclease (BRN) of Bos taurus (Bovine).